Consider the following 766-residue polypeptide: General transcription and DNA repair factor IIH helicase/translocase subunit XPB2 (766 aa).

Positions 1–56 are disordered; the sequence is MGNDERKRPTKKMKYGGKDDQKMKNIQNVEDYYDDADEDSRDGEGEEKRRDFTDLE. Residues 31–41 are compositionally biased toward acidic residues; that stretch reads DYYDDADEDSR. Over residues 42 to 56 the composition is skewed to basic and acidic residues; the sequence is DGEGEEKRRDFTDLE. Residues 293 to 455 enclose the Helicase ATP-binding domain; that stretch reads MFGNGRARSG…DLNFLIGPKL (163 aa). 306-313 serves as a coordination point for ATP; it reads LPCGAGKS. The DEVH box signature appears at 408–411; it reads DEVH. The Helicase C-terminal domain maps to 510-676; that stretch reads RACEFLIRFH…SLPPPDAGSS (167 aa). The segment covering 739–748 has biased composition (polar residues); it reads SGRQKSGNQS. The tract at residues 739 to 766 is disordered; sequence SGRQKSGNQSKKPKDPTKRHNIFKKRYV. The Nuclear localization signal motif lies at 749-765; that stretch reads KKPKDPTKRHNIFKKRY. Basic residues predominate over residues 757–766; it reads RHNIFKKRYV.

Belongs to the helicase family. RAD25/XPB subfamily. In terms of assembly, component of the 7-subunit TFIIH core complex composed of XPB, XPD, TFB1/GTF2H1, GTF2H2/P44, TFB4/GTF2H3, TFB2/GTF2H4 and TFB5/GTF2H5, which is active in NER. The core complex associates with the 3-subunit CDK-activating kinase (CAK) module composed of CYCH1/cyclin H1, CDKD and MAT1/At4g30820 to form the 10-subunit holoenzyme (holo-TFIIH) active in transcription. In terms of tissue distribution, expressed ubiquitously.

The protein localises to the nucleus. It carries out the reaction Couples ATP hydrolysis with the unwinding of duplex DNA by translocating in the 3'-5' direction.. The catalysed reaction is ATP + H2O = ADP + phosphate + H(+). Its function is as follows. ATP-dependent 3'-5' DNA helicase/translocase; binds dsDNA rather than ssDNA, unzipping it in a translocase rather than classical helicase activity. Component of the general transcription and DNA repair factor IIH (TFIIH) core complex. When complexed to CDK-activating kinase (CAK), involved in RNA transcription by RNA polymerase II. The ATPase activity of XPB/ERCC3, but not its helicase activity, is required for DNA opening; it may wrap around the damaged DNA wedging it open, causing localized melting and twisting that allows XPD/ERCC2 helicase to anchor. The ATP-dependent helicase activity of XPB/ERCC3 may be required for promoter escape. Also involved in transcription-coupled nucleotide excision repair (NER) of damaged DNA. In NER, TFIIH acts by opening DNA around the lesion to allow the excision of the damaged oligonucleotide and its replacement by a new DNA fragment. The structure of the TFIIH transcription complex differs from the NER-TFIIH complex. Partially complements UV sensitivity of a yeast SSL2 mutation. The polypeptide is General transcription and DNA repair factor IIH helicase/translocase subunit XPB2 (XPB2) (Arabidopsis thaliana (Mouse-ear cress)).